A 1573-amino-acid polypeptide reads, in one-letter code: Soluble scavenger receptor cysteine-rich domain-containing protein SSC5D (1573 aa).

An N-terminal signal peptide occupies residues 1–16; sequence MRVLACLLAALVGIQA. An SRCR 1 domain is found at 20-120; the sequence is LRLADGPHGC…HEEDAGVVCA (101 aa). 3 disulfides stabilise this stretch: cysteine 45–cysteine 109, cysteine 58–cysteine 119, and cysteine 89–cysteine 99. Positions 153-192 are disordered; sequence EPLVTHAPRPAGNPQNASRKKSPRPKQAKSTRAPLLTTGA. N-linked (GlcNAc...) asparagine glycosylation is present at asparagine 168. Residues 170–181 are compositionally biased toward basic residues; that stretch reads SRKKSPRPKQAK. SRCR domains follow at residues 198–298 and 304–404; these read LRLV…LVCT and LRLA…AVCD. 6 disulfides stabilise this stretch: cysteine 223–cysteine 287, cysteine 236–cysteine 297, cysteine 267–cysteine 277, cysteine 329–cysteine 393, cysteine 342–cysteine 403, and cysteine 373–cysteine 383. N-linked (GlcNAc...) asparagine glycans are attached at residues asparagine 376 and asparagine 420. A disordered region spans residues 412 to 465; it reads PPTAPTDSNNSTPREAASRPPSTMTSQAPGTAGVSPPPASPTVLWEPGPEAGSP. A compositionally biased stretch (polar residues) spans 431–440; that stretch reads PPSTMTSQAP. Residues 467-568 enclose the SRCR 4 domain; the sequence is LRLVAGPSKC…HNEDVGVTCT (102 aa). Intrachain disulfides connect cysteine 492–cysteine 557, cysteine 505–cysteine 567, and cysteine 537–cysteine 547. Residues 614-769 form a disordered region; sequence EKTTTKAPGK…SVSTTGESGL (156 aa). Basic residues predominate over residues 626–637; sequence KSTKKWVTKNAK. The span at 654–671 shows a compositional bias: polar residues; the sequence is AQSPPDLTSQTTAALTTE. The segment covering 672–685 has biased composition (basic and acidic residues); sequence ASRRPTSEFTRRPT. Composition is skewed to polar residues over residues 687–702 and 711–735; these read EAPQ…TLTP and KTMA…SIPQ. Positions 772-872 constitute an SRCR 5 domain; sequence VRLADGPNRC…HEEDVGLTCT (101 aa). Intrachain disulfides connect cysteine 797-cysteine 861, cysteine 810-cysteine 871, and cysteine 841-cysteine 851. Disordered stretches follow at residues 895–1475 and 1554–1573; these read KGTT…PCVA and MPAP…RGDV. Over residues 924-934 the composition is skewed to basic and acidic residues; sequence RLPDTGSKDGY. 2 stretches are compositionally biased toward pro residues: residues 1004 to 1020 and 1083 to 1093; these read PPTP…PPGP and TPEPSPTPLPT. Residues 1101–1140 show a composition bias toward polar residues; that stretch reads DPSTPSEVTSLSPTSEQVPESDTTPDLDTTPYSSTVSEYS. Pro residues predominate over residues 1144 to 1160; it reads DPSPSPHPTTTPDPTMA. 2 stretches are compositionally biased toward low complexity: residues 1161-1175 and 1185-1277; these read PDPI…TPHF and PHPT…MPHP. Pro residues predominate over residues 1278-1328; the sequence is TTTPHPTTTPHPTTTPHPTTTPHPTMTPDPTTTPYPTTTPDPTTTPHPTTP. 2 stretches are compositionally biased toward polar residues: residues 1335–1354 and 1364–1380; these read VITT…SPTL and PQLT…TSQI. Over residues 1381–1401 the composition is skewed to low complexity; the sequence is PTLEPSPALESSPSRSSTATS. Residues 1464-1475 show a composition bias toward pro residues; the sequence is GQSPGPHGPCVA.

In terms of assembly, interacts with LGALS1 and laminin. In terms of tissue distribution, highly expressed in monocytes/macrophages and T-lymphocytes. Highly expressed in placenta and spleen, and also detected at lower levels in colon, and more weakly in lung, heart and kidney.

The protein localises to the secreted. It localises to the cytoplasm. Functionally, binds to extracellular matrix proteins. Binds to pathogen-associated molecular patterns (PAMPs) present on the cell walls of Gram-positive and Gram-negative bacteria and fungi, behaving as a pattern recognition receptor (PRR). Induces bacterial and fungal aggregation and subsequent inhibition of PAMP-induced cytokine release. Does not possess intrinsic bactericidal activity. May play a role in the innate defense and homeostasis of certain epithelial surfaces. The polypeptide is Soluble scavenger receptor cysteine-rich domain-containing protein SSC5D (SSC5D) (Homo sapiens (Human)).